The chain runs to 147 residues: Signal peptidase complex subunit 3 (147 aa).

Residues 1–6 are Cytoplasmic-facing; it reads MHSWVQ. A helical; Signal-anchor for type II membrane protein transmembrane segment spans residues 7 to 29; sequence RLLTTATTAALLLLAACCAASAL. Over 30-147 the chain is Lumenal; it reads DAFHVPSVQA…EFNLPDSYTS (118 aa).

It belongs to the SPCS3 family. As to quaternary structure, component of the signal peptidase complex (SPC) composed of a catalytic subunit SEC11 and three accessory subunits SPCS1, SPCS2 and SPCS3. The complex induces a local thinning of the ER membrane which is used to measure the length of the signal peptide (SP) h-region of protein substrates. This ensures the selectivity of the complex towards h-regions shorter than 18-20 amino acids.

Its subcellular location is the endoplasmic reticulum membrane. In terms of biological role, essential component of the signal peptidase complex (SPC) which catalyzes the cleavage of N-terminal signal sequences from nascent proteins as they are translocated into the lumen of the endoplasmic reticulum. Essential for the SPC catalytic activity, possibly by stabilizing and positioning the active center of the complex close to the lumenal surface. This is Signal peptidase complex subunit 3 from Oryza sativa subsp. japonica (Rice).